The primary structure comprises 381 residues: MKIVADQNIPALSDLLSGAGTLSYFSERIPPQKLLAEADALLVRSVTQVDEVLLEQAPELKFVASATIGTEHINLQALEERGIGFAHAPGANAQSVGEYVLCAVLNWLSDQPRYVADEIDVAIVGAGHTGKAAGKRLEALGLNVHYYDPPLCKKGVKFVHDHWQRVLTADIISCHVPLTRDGDFPTQHLFENTALQSLHSQQLLINASRGAVIDNNALLERVEQGERPSLVLDVWENEPEVLSGLVPYVDIATPHIAGHSLEGKVGGAVMISNALLEHFGKPADKTLSDVLPGKAWNERDAGGLNSLESLNLWAKEHYDLFRDDELFRQQGLTTEGFDSLRRNYRKESPRREFINQVVTCHNSEQYIQFLQLGFSARLLSK.

Positions 45 and 67 each coordinate substrate. NAD(+)-binding positions include Asp148, 207-209 (ASR), and Asp233. Arg209 is a catalytic residue. The active site involves Glu238. His255 functions as the Proton donor in the catalytic mechanism. Gly258 is a binding site for NAD(+).

It belongs to the D-isomer specific 2-hydroxyacid dehydrogenase family. PdxB subfamily. In terms of assembly, homodimer.

It localises to the cytoplasm. The enzyme catalyses 4-phospho-D-erythronate + NAD(+) = (R)-3-hydroxy-2-oxo-4-phosphooxybutanoate + NADH + H(+). It functions in the pathway cofactor biosynthesis; pyridoxine 5'-phosphate biosynthesis; pyridoxine 5'-phosphate from D-erythrose 4-phosphate: step 2/5. Functionally, catalyzes the oxidation of erythronate-4-phosphate to 3-hydroxy-2-oxo-4-phosphonooxybutanoate. The sequence is that of Erythronate-4-phosphate dehydrogenase from Idiomarina loihiensis (strain ATCC BAA-735 / DSM 15497 / L2-TR).